A 527-amino-acid chain; its full sequence is MAKIRTDAPVMPPETPPRSSEVGEIDTRAPFQSVRDALSLFRQVSFSKKQPPRLSSSSSSQSQDTTTDVSDKEMQLLLAEQEMDRVKICLDGSVAAKAQALSDLDSAQRKAADLRVKLESIKHSRKCAISTKHTMNQRLEQLQSENQETESTREDYILITAELFMAKYELAELKQQFNLSVEERLAELQRAEEAECASMVNSNKIKDMSHDIAEMRDAAERLNSDAARKKEEEEQIKEESIALRETYVCKKLEAKQRLEDLKRDCDPELKKDIEELMEISTENERLQEEIKLSGELKEAKSAMQEIYDEESSYKSLVGSLTVELDGVQRENRELKGKEKERQEAEEGEWVEASRKVDEIMREAEKTRKEAEEMRMNVDELRREAAAKHMVMGEAVKQLEIVGRAVEKAKTAEKRAVEDMKVLTEKKESLTHDEPDKKIRISLKEYEELRGKHEESERMVQFKAKTVAAQLEEINESRIEGERKLEEKIKEMEELKAAIDGALRKAEIAEEAHSIVDAELRKWKPQDL.

Disordered regions lie at residues 1–28 (MAKIRTDAPVMPPETPPRSSEVGEIDTR) and 46–70 (FSKKQPPRLSSSSSSQSQDTTTDVS). A compositionally biased stretch (low complexity) spans 55–68 (SSSSSSQSQDTTTD). Coiled coils occupy residues 95 to 159 (AAKA…YILI), 202 to 389 (SNKI…AKHM), and 436 to 513 (KKIR…EAHS).

It belongs to the WEB family.

In Arabidopsis thaliana (Mouse-ear cress), this protein is Putative WEB family protein At4g17210.